Here is an 823-residue protein sequence, read N- to C-terminus: Endoplasmin homolog (823 aa).

The first 23 residues, methionine 1–glycine 23, serve as a signal peptide directing secretion. The segment at asparagine 29–valine 60 is disordered. Positions aspartate 39 to glycine 48 are enriched in basic and acidic residues. Residues glutamate 106, asparagine 110, aspartate 154, methionine 159, asparagine 167, lysine 173, serine 174–glycine 175, glutamine 194–phenylalanine 199, phenylalanine 199, and threonine 246 each bind ATP. N-linked (GlcNAc...) asparagine glycosylation is present at asparagine 110. Residues glutamate 289–threonine 328 form a disordered region. Positions threonine 290 to aspartate 321 are enriched in acidic residues. N-linked (GlcNAc...) asparagine glycans are attached at residues asparagine 452 and asparagine 620. Residues valine 777–glutamate 792 are compositionally biased toward acidic residues. The interval valine 777–leucine 823 is disordered. Residues lysine 820–leucine 823 carry the Prevents secretion from ER motif.

The protein belongs to the heat shock protein 90 family. As to quaternary structure, interacts with FKBP42. Interacts with P23-1. In terms of tissue distribution, ubiquitous.

Its subcellular location is the endoplasmic reticulum lumen. Its function is as follows. May have a molecular chaperone role in the processing of secreted materials. Required for shoot apical meristem (SAM), root apical meristem (RAM) and floral meristem (FM) formation, probably by regulating the folding of CLAVATA proteins (CLVs). Also involved in pollen tube elongation. Involved in resistance to tunicamycin- or high calcium-induced ER stresses. Possesses ATPase activity. The polypeptide is Endoplasmin homolog (Arabidopsis thaliana (Mouse-ear cress)).